The following is a 247-amino-acid chain: ATP synthase subunit a, chloroplastic (247 aa).

A run of 5 helical transmembrane segments spans residues 38–58, 95–115, 134–154, 199–219, and 220–240; these read QVLITSWVVIAILLGSVIIAV, VPFIGTMFLFIFVSNWSGALL, INTTVALALPTSVAYFYAGLT, LVVVVLVSLVPSLVPIPVMFL, and GLFTSGIQALIFATLAAAYIG.

Belongs to the ATPase A chain family. As to quaternary structure, F-type ATPases have 2 components, CF(1) - the catalytic core - and CF(0) - the membrane proton channel. CF(1) has five subunits: alpha(3), beta(3), gamma(1), delta(1), epsilon(1). CF(0) has four main subunits: a, b, b' and c.

It is found in the plastid. The protein localises to the chloroplast thylakoid membrane. Its function is as follows. Key component of the proton channel; it plays a direct role in the translocation of protons across the membrane. The protein is ATP synthase subunit a, chloroplastic of Dioscorea elephantipes (Elephant's foot yam).